We begin with the raw amino-acid sequence, 586 residues long: ATPase family AAA domain-containing protein 3A (586 aa).

Disordered stretches follow at residues 1-55 (MSWL…PTGL) and 111-134 (QAEE…QYQD). An N-acetylserine modification is found at S2. Residues 2 to 50 (SWLFGINKGPKGEGAGPPPPLPPAQPGAEGGGDRGLGDRPAPKDKWSNF) are required for interaction with the inner surface of the mitochondrial outer membrane. The Mitochondrial intermembrane segment spans residues 2-246 (SWLFGINKGP…FRAFVTDWDK (245 aa)). Residues 17 to 26 (GPPPPLPPAQ) show a composition bias toward pro residues. Basic and acidic residues-rich tracts occupy residues 32–48 (GGDR…DKWS) and 111–125 (QAEE…ETRQ). Positions 86–219 (QLEQQSKLKE…QIRLKAAEHR (134 aa)) form a coiled coil. Residues 247–264 (VTATVAGLTLLAVGVYSA) traverse the membrane as a helical segment. Topologically, residues 265-586 (KNATLVAGRF…PGRGDEPSPS (322 aa)) are mitochondrial matrix. The interval 290–305 (RITVLEALRHPIQVSR) is S100B-binding. S321 carries the post-translational modification Phosphoserine. 352–359 (GPPGTGKT) contributes to the ATP binding site. K491 carries the post-translational modification N6-acetyllysine.

This sequence belongs to the AAA ATPase family. As to quaternary structure, can form homooligomers. Homodimer formation at the N-terminus may be regulated by ATP and is required for the interaction with the inner surface of the mitochondrial outer membrane and correct mitochondrial homeostasis. Interacts with components of the mitochondrial ribosome and with other proteins involved in mitochondrial RNA metabolism. May also interact with protein involved in lipid metabolism, including STARD9. May interact with FAM210A. Interacts with GADD45GIP1. Interacts with S100B in a Ca(+2)- and Zn(+2)-dependent manner; this interaction probably occurs in the cytosol prior to mitochondrial targeting. S100B could assist ATAD3A cytoplasmic processing, preventing aggregation and favoring mitochondrial localization. Interacts with HSP60/HSPD1. Forms heterooligomers with ATAD3B; this interaction may affect ATAD3A activity. Interacts with CLPB. Interacts with EIF2AK3/PERK; ATAD3A and EIF2S1/eIF-2-alpha occupy a common binding site within the cytoplasmic loop of EIF2AK3/PERK, leading to prevent EIF2AK3/PERK association with its substrate EIF2S1/eIF-2-alpha. Overexpressed in lung adenocarcinomas (at protein level).

The protein resides in the mitochondrion inner membrane. Its subcellular location is the mitochondrion matrix. It is found in the mitochondrion nucleoid. The enzyme catalyses ATP + H2O = ADP + phosphate + H(+). Its function is as follows. Essential for mitochondrial network organization, mitochondrial metabolism and cell growth at organism and cellular level. May play an important role in mitochondrial protein synthesis. May also participate in mitochondrial DNA replication. May bind to mitochondrial DNA D-loops and contribute to nucleoid stability. Required for enhanced channeling of cholesterol for hormone-dependent steroidogenesis. Involved in mitochondrial-mediated antiviral innate immunity. Required to protect mitochondria from the PERK-mediated unfolded protein response: specifically inhibits the activity of EIF2AK3/PERK at mitochondria-endoplasmic reticulum contact sites, thereby providing a safe haven for mitochondrial protein translation during endoplasmic reticulum stress. Ability to inhibit EIF2AK3/PERK is independent of its ATPase activity. Also involved in the mitochondrial DNA damage response by promoting signaling between damaged genomes and the mitochondrial membrane, leading to activation of the integrated stress response (ISR). This Homo sapiens (Human) protein is ATPase family AAA domain-containing protein 3A.